Reading from the N-terminus, the 170-residue chain is Peptide deformylase (170 aa).

Residues cysteine 91 and histidine 133 each contribute to the Fe cation site. The active site involves glutamate 134. Residue histidine 137 coordinates Fe cation.

Belongs to the polypeptide deformylase family. Fe(2+) serves as cofactor.

The enzyme catalyses N-terminal N-formyl-L-methionyl-[peptide] + H2O = N-terminal L-methionyl-[peptide] + formate. Removes the formyl group from the N-terminal Met of newly synthesized proteins. Requires at least a dipeptide for an efficient rate of reaction. N-terminal L-methionine is a prerequisite for activity but the enzyme has broad specificity at other positions. This chain is Peptide deformylase, found in Pectobacterium carotovorum subsp. carotovorum (strain PC1).